Here is an 85-residue protein sequence, read N- to C-terminus: RNA-binding protein Hfq (85 aa).

In terms of domain architecture, Sm spans 10-70; it reads DAFLNQVRKE…ISTIIPQRPV (61 aa).

The protein belongs to the Hfq family. Homohexamer.

Functionally, RNA chaperone that binds small regulatory RNA (sRNAs) and mRNAs to facilitate mRNA translational regulation in response to envelope stress, environmental stress and changes in metabolite concentrations. Also binds with high specificity to tRNAs. The sequence is that of RNA-binding protein Hfq from Carboxydothermus hydrogenoformans (strain ATCC BAA-161 / DSM 6008 / Z-2901).